Here is a 343-residue protein sequence, read N- to C-terminus: Tribbles homolog 2 (343 aa).

A disordered region spans residues 25 to 50; sequence EELSSIRSAEPSQSFSPNLGSPSPPE. Polar residues predominate over residues 29 to 45; that stretch reads SIRSAEPSQSFSPNLGS. The region spanning 61–308 is the Protein kinase domain; sequence IGKYLLLEPL…SQEILDHPWF (248 aa).

It belongs to the protein kinase superfamily. CAMK Ser/Thr protein kinase family. Tribbles subfamily. In terms of tissue distribution, expressed in granulosa cells of the dominant follicles of the ovary and down-regulated in ovulatory follicles.

The protein resides in the cytoplasm. Its subcellular location is the cytoskeleton. Its function is as follows. Interacts with MAPK kinases and regulates activation of MAP kinases. Does not display kinase activity. The protein is Tribbles homolog 2 of Bos taurus (Bovine).